A 260-amino-acid polypeptide reads, in one-letter code: Adenosylcobinamide-GDP ribazoletransferase (260 aa).

Helical transmembrane passes span 42-62, 64-84, 117-137, 144-164, 192-212, 214-234, and 240-260; these read PLAGGILGLLAGVALLIANAI, LPPLAAALIAIGALAAMTGAL, FAALTLVIWTGVKASLLMAII, YALLALIGTEAASRAGMLAFW, GLGLALLAIGFLPSGGMVALI, ALVLMTVVLFGFARLCMAKIG, and TLGAAQQIGSLAALIGLVMAL.

This sequence belongs to the CobS family. Mg(2+) is required as a cofactor.

It localises to the cell inner membrane. The enzyme catalyses alpha-ribazole + adenosylcob(III)inamide-GDP = adenosylcob(III)alamin + GMP + H(+). It carries out the reaction alpha-ribazole 5'-phosphate + adenosylcob(III)inamide-GDP = adenosylcob(III)alamin 5'-phosphate + GMP + H(+). Its pathway is cofactor biosynthesis; adenosylcobalamin biosynthesis; adenosylcobalamin from cob(II)yrinate a,c-diamide: step 7/7. Joins adenosylcobinamide-GDP and alpha-ribazole to generate adenosylcobalamin (Ado-cobalamin). Also synthesizes adenosylcobalamin 5'-phosphate from adenosylcobinamide-GDP and alpha-ribazole 5'-phosphate. The protein is Adenosylcobinamide-GDP ribazoletransferase of Brucella abortus (strain S19).